We begin with the raw amino-acid sequence, 357 residues long: Aminomethyltransferase (357 aa).

Belongs to the GcvT family. The glycine cleavage system is composed of four proteins: P, T, L and H.

The enzyme catalyses N(6)-[(R)-S(8)-aminomethyldihydrolipoyl]-L-lysyl-[protein] + (6S)-5,6,7,8-tetrahydrofolate = N(6)-[(R)-dihydrolipoyl]-L-lysyl-[protein] + (6R)-5,10-methylene-5,6,7,8-tetrahydrofolate + NH4(+). Its function is as follows. The glycine cleavage system catalyzes the degradation of glycine. The sequence is that of Aminomethyltransferase from Deinococcus deserti (strain DSM 17065 / CIP 109153 / LMG 22923 / VCD115).